A 163-amino-acid chain; its full sequence is Large ribosomal subunit protein uL22c (163 aa).

This sequence belongs to the universal ribosomal protein uL22 family. Part of the 50S ribosomal subunit.

The protein resides in the plastid. The protein localises to the chloroplast. In terms of biological role, this protein binds specifically to 23S rRNA. The globular domain of the protein is located near the polypeptide exit tunnel on the outside of the subunit, while an extended beta-hairpin is found that lines the wall of the exit tunnel in the center of the 70S ribosome. The sequence is that of Large ribosomal subunit protein uL22c (rpl22) from Lobularia maritima (Sweet alyssum).